We begin with the raw amino-acid sequence, 329 residues long: Acetyl-coenzyme A carboxylase carboxyl transferase subunit alpha (329 aa).

One can recognise a CoA carboxyltransferase C-terminal domain in the interval 40-294; sequence QLETLAARRR…REAIERHLDD (255 aa).

Belongs to the AccA family. Acetyl-CoA carboxylase is a heterohexamer composed of biotin carboxyl carrier protein (AccB), biotin carboxylase (AccC) and two subunits each of ACCase subunit alpha (AccA) and ACCase subunit beta (AccD).

The protein resides in the cytoplasm. The catalysed reaction is N(6)-carboxybiotinyl-L-lysyl-[protein] + acetyl-CoA = N(6)-biotinyl-L-lysyl-[protein] + malonyl-CoA. Its pathway is lipid metabolism; malonyl-CoA biosynthesis; malonyl-CoA from acetyl-CoA: step 1/1. Functionally, component of the acetyl coenzyme A carboxylase (ACC) complex. First, biotin carboxylase catalyzes the carboxylation of biotin on its carrier protein (BCCP) and then the CO(2) group is transferred by the carboxyltransferase to acetyl-CoA to form malonyl-CoA. The sequence is that of Acetyl-coenzyme A carboxylase carboxyl transferase subunit alpha from Prochlorococcus marinus (strain MIT 9303).